Reading from the N-terminus, the 66-residue chain is UPF0337 protein BT9727_0908 (66 aa).

Positions 1-22 (MSENGLKEQITGKVEKTKGQVK) are disordered. A compositionally biased stretch (basic and acidic residues) spans 13-22 (KVEKTKGQVK).

It belongs to the UPF0337 (CsbD) family.

The sequence is that of UPF0337 protein BT9727_0908 from Bacillus thuringiensis subsp. konkukian (strain 97-27).